Here is a 186-residue protein sequence, read N- to C-terminus: Mediator of RNA polymerase II transcription subunit 10a (186 aa).

This sequence belongs to the Mediator complex subunit 10 family. As to quaternary structure, mono-, di- and oligomers. Component of the Mediator complex. Interacts with GEBPL.

Its subcellular location is the nucleus. Functionally, component of the Mediator complex, a coactivator involved in the regulated transcription of nearly all RNA polymerase II-dependent genes. Mediator functions as a bridge to convey information from gene-specific regulatory proteins to the basal RNA polymerase II transcription machinery. The Mediator complex, having a compact conformation in its free form, is recruited to promoters by direct interactions with regulatory proteins and serves for the assembly of a functional pre-initiation complex with RNA polymerase II and the general transcription factors. This Arabidopsis thaliana (Mouse-ear cress) protein is Mediator of RNA polymerase II transcription subunit 10a.